The primary structure comprises 263 residues: Tryptophan synthase alpha chain (263 aa).

Residues Glu49 and Asp60 each act as proton acceptor in the active site.

This sequence belongs to the TrpA family. As to quaternary structure, tetramer of two alpha and two beta chains.

It carries out the reaction (1S,2R)-1-C-(indol-3-yl)glycerol 3-phosphate + L-serine = D-glyceraldehyde 3-phosphate + L-tryptophan + H2O. The protein operates within amino-acid biosynthesis; L-tryptophan biosynthesis; L-tryptophan from chorismate: step 5/5. In terms of biological role, the alpha subunit is responsible for the aldol cleavage of indoleglycerol phosphate to indole and glyceraldehyde 3-phosphate. The polypeptide is Tryptophan synthase alpha chain (Cereibacter sphaeroides (strain ATCC 17025 / ATH 2.4.3) (Rhodobacter sphaeroides)).